Consider the following 137-residue polypeptide: Putative pre-16S rRNA nuclease (137 aa).

Belongs to the YqgF nuclease family.

It localises to the cytoplasm. In terms of biological role, could be a nuclease involved in processing of the 5'-end of pre-16S rRNA. The sequence is that of Putative pre-16S rRNA nuclease from Clostridium botulinum (strain Eklund 17B / Type B).